The following is a 334-amino-acid chain: Holliday junction branch migration complex subunit RuvB (334 aa).

Residues 4–184 (ADRLISAAVI…FGIVQRLEFY (181 aa)) form a large ATPase domain (RuvB-L) region. Residues Ile-23, Arg-24, Gly-65, Lys-68, Thr-69, Thr-70, 131 to 133 (EDY), Arg-174, Tyr-184, and Arg-221 contribute to the ATP site. Thr-69 contacts Mg(2+). The tract at residues 185–255 (QVADLEHIVS…VAMKALDMLN (71 aa)) is small ATPAse domain (RuvB-S). The head domain (RuvB-H) stretch occupies residues 258–334 (AEGFDFMDRK…YKHFGITREE (77 aa)). The DNA site is built by Arg-294, Arg-313, and Arg-318.

Belongs to the RuvB family. As to quaternary structure, homohexamer. Forms an RuvA(8)-RuvB(12)-Holliday junction (HJ) complex. HJ DNA is sandwiched between 2 RuvA tetramers; dsDNA enters through RuvA and exits via RuvB. An RuvB hexamer assembles on each DNA strand where it exits the tetramer. Each RuvB hexamer is contacted by two RuvA subunits (via domain III) on 2 adjacent RuvB subunits; this complex drives branch migration. In the full resolvosome a probable DNA-RuvA(4)-RuvB(12)-RuvC(2) complex forms which resolves the HJ.

Its subcellular location is the cytoplasm. It catalyses the reaction ATP + H2O = ADP + phosphate + H(+). The RuvA-RuvB-RuvC complex processes Holliday junction (HJ) DNA during genetic recombination and DNA repair, while the RuvA-RuvB complex plays an important role in the rescue of blocked DNA replication forks via replication fork reversal (RFR). RuvA specifically binds to HJ cruciform DNA, conferring on it an open structure. The RuvB hexamer acts as an ATP-dependent pump, pulling dsDNA into and through the RuvAB complex. RuvB forms 2 homohexamers on either side of HJ DNA bound by 1 or 2 RuvA tetramers; 4 subunits per hexamer contact DNA at a time. Coordinated motions by a converter formed by DNA-disengaged RuvB subunits stimulates ATP hydrolysis and nucleotide exchange. Immobilization of the converter enables RuvB to convert the ATP-contained energy into a lever motion, pulling 2 nucleotides of DNA out of the RuvA tetramer per ATP hydrolyzed, thus driving DNA branch migration. The RuvB motors rotate together with the DNA substrate, which together with the progressing nucleotide cycle form the mechanistic basis for DNA recombination by continuous HJ branch migration. Branch migration allows RuvC to scan DNA until it finds its consensus sequence, where it cleaves and resolves cruciform DNA. The polypeptide is Holliday junction branch migration complex subunit RuvB (Yersinia pseudotuberculosis serotype O:1b (strain IP 31758)).